Here is an 87-residue protein sequence, read N- to C-terminus: Small ribosomal subunit protein bS20 (87 aa).

Residues 1-22 are disordered; sequence MANIKSQIKRIGTNKKAQERNK.

This sequence belongs to the bacterial ribosomal protein bS20 family.

Functionally, binds directly to 16S ribosomal RNA. This is Small ribosomal subunit protein bS20 from Clavibacter sepedonicus (Clavibacter michiganensis subsp. sepedonicus).